A 65-amino-acid chain; its full sequence is Large ribosomal subunit protein bL35 (65 aa).

Belongs to the bacterial ribosomal protein bL35 family.

The polypeptide is Large ribosomal subunit protein bL35 (Thermus thermophilus (strain ATCC BAA-163 / DSM 7039 / HB27)).